Consider the following 311-residue polypeptide: NAD kinase (311 aa).

D67 (proton acceptor) is an active-site residue. Residues 67–68, R72, 140–141, R151, D170, 181–186, and Q240 each bind NAD(+); these read DG, ND, and TAYSLS. Basic and acidic residues predominate over residues 278–287; that stretch reads LKEGGSRQDD. The interval 278-311 is disordered; it reads LKEGGSRQDDENPAATVNPETDSKYPHSHPGSTG.

Belongs to the NAD kinase family. A divalent metal cation is required as a cofactor.

The protein resides in the cytoplasm. It carries out the reaction NAD(+) + ATP = ADP + NADP(+) + H(+). Its function is as follows. Involved in the regulation of the intracellular balance of NAD and NADP, and is a key enzyme in the biosynthesis of NADP. Catalyzes specifically the phosphorylation on 2'-hydroxyl of the adenosine moiety of NAD to yield NADP. In Moorella thermoacetica (strain ATCC 39073 / JCM 9320), this protein is NAD kinase.